The following is a 130-amino-acid chain: Small ribosomal subunit protein uS8 (130 aa).

This sequence belongs to the universal ribosomal protein uS8 family. As to quaternary structure, part of the 30S ribosomal subunit.

Its function is as follows. One of the primary rRNA binding proteins, it binds directly to 16S rRNA central domain where it helps coordinate assembly of the platform of the 30S subunit. The chain is Small ribosomal subunit protein uS8 from Pyrobaculum neutrophilum (strain DSM 2338 / JCM 9278 / NBRC 100436 / V24Sta) (Thermoproteus neutrophilus).